Here is a 2017-residue protein sequence, read N- to C-terminus: MDEPPSKKSRADSDYDSGLDALSALESLEAFPTSSKDTDVDNNPSTSAGGSGGPSGSTPHPQGTPQPAPSNNGGFNLQPGQSQPQQPPQNMGGGVNGSVLQELLMNPSQTSNNSPRPQAYPPGQQNAFNRSPMMPNGTPNMMSPPSMGRVPGPSPGGPQPPGPGQPQMRPGQPGMFQGDQQQQMMMGAQGQQFPGMMHRYPYAQGGPPPGAQGMPQGYPGVSRGGPTPGQPMGRGAMMNGAMPRSGPMPTQGRPGIPPNQQAMMQPMMTDRQFMQHGQYGQQRPEFMQQYGRPGGYPMMHQGMMMDSNGQPIRGPNQMMMMSNGHPGMSHGPPNGQPGPQAAAAQHAAQQQAAAQAQAQAAAQQQQQQQREQEAAAAAQRNGAGRATTPGSSMLATHQDPEKRKLIQQQLVLLLHAHKCSQREKENRDFAAKNQPPPHAACTLPHCSTMKEVLTHMTSCNVGRLCHSDTTQTTKKCSVAHCASSRQIIAHWKNCSREDCPVCKPLKRIQDTPLQFSLPDLANLIGVNGNSNGSAEGDGLHQFGSPAMRTGNITNSLFEGFNGNPFQNGPNRGGPRPPGGNGEIPNLPPPDMPDCTKEWHHQVTKDLRNHLVGKLVKAIFPEPNQEAMNDNRLKDLIAYARKVEKEMFESANDREEYYHLLAEKIYKIQKELQEKKNSRLNQGAAAHDQYAIPPSNELAQMLGVEGGRSDVHSEGSSMAVAPSQQNQPWGGAPNSNMHQQIPPNGQVPQVNNSSTFPSSGNSTPNIGASSTVSAMLQPKTEPMDDQNTDSLSSRPPTAIGFGGSSSSTPAPIMNGIVKKEEDPEESSNQAPPSVKDTKDGVAESKPKEQQAKREPTPPPTEDTVFSQEDLIKFLLPVWEKLDKSEDAAPFRVPVDAKLLNIPDYHEIIKRPMDLETVHKKLYAGQYQNAGQFCDDIWLMLDNAWLYNRKNSKVYKYGLKLSEMFVSEMDPVMKSMGYCCAKKLAFTPLSLFCYGAAMCTIAREQQYWVFEQSSTQYNVTVTERYTYCQKCFDALPPEGISLSENPNDRNNMAPKTSFTEQKNSVIDYEPFERCKYCMRKWHRICALHDKKVYPEGFICECCRTAKKYQKPDNKYLASKLPHNKLSTFLEDRVNGFIKKQLQAEAHKYPVIIRTLCVQDKEAEVKAQMKQKYVESNQFPEKFPYRTKAVFAFEIIDGVEVCFFGLHVQEYGSACPAPNARRVYIAYLDSVHFFQPRELRTDVYHELLLGYLDYAKMLGYTMAHIWACPPSEGDDYIFHCHPPEQKIPKPKRLQDWYKKMLEKGVQEGSVVEFKDIYKQARDDNLTTPTQLPYFEGDFWPNVIEDCIREASNEEAQRKVKEDDDDGEDADGGLGGGDSGKKKSSKNKKNNLKKNAKMNKKKAGSITGNEVADKLYSQFEKHKEVFFTIRLVSLQNEPAVLAKPISDPDGLMQSDMMDGRDTFLTKAREEHWEFSSLRRAKYSTLCLAYSLHETDSKGMEYTCNKCSSPAVWHCQSCDDFDLCDGCKPTTQHPHEMEKIKSLIGGGEAGDSAAGGTRYESIQRCIASLVHACQCRDANCRRMSCHKMKRVVQHTKMCKKRINGTCPVCKQLIALCCYHAKHCTRDACTVPFCMNIRQKLAEQKRSQQRRADMMMRRRMEGLQSHVGGAAPTPSTVSNGTPSNAPTPPVSAGPGPAVKGGGVGQVQMQQHQGSHVGGSGPAGMGQPMNSFGGMPGMGLGPNAQNGPGLPGMNPQMNANQSRYMPNGPGLGQSGAPGQQQQPMYSSGMPMQRPGGLGGMNPQQQPQQQQGHPGLQNPGGRPGGVHGMGQNQPVRNNQDMVMNMQMQNQHQQPPPFDSTLQPQIMKINSRLKAAKTEEERETVFSDLKKTPHLFHAWLRMRENQNLVPNRMQGYSQMSMGSSNLQNLQQQQLQQQQAGAMRGGGGFAPGQNNSQPRAPSGQFASMNPSMQQQYPQQQQGWPQQRQQNPGGMQQNANPYNQFQNRQNMMMMPQQQQPHPSNAGGQ.

Positions 1-13 (MDEPPSKKSRADS) are enriched in basic and acidic residues. Residues 1–182 (MDEPPSKKSR…PGMFQGDQQQ (182 aa)) are disordered. Composition is skewed to low complexity over residues 21 to 30 (ALSALESLEA) and 78 to 90 (QPGQSQPQQPPQN). Polar residues predominate over residues 106–116 (NPSQTSNNSPR). Over residues 141–151 (MMSPPSMGRVP) the composition is skewed to low complexity. The segment covering 152 to 164 (GPSPGGPQPPGPG) has biased composition (pro residues). Over residues 165–182 (QPQMRPGQPGMFQGDQQQ) the composition is skewed to low complexity. Arg-234 carries the post-translational modification Symmetric dimethylarginine; by PRMT5; in vitro. The segment at 307–398 (SNGQPIRGPN…PGSSMLATHQ (92 aa)) is disordered. Low complexity predominate over residues 340-379 (QAAAAQHAAQQQAAAQAQAQAAAQQQQQQQREQEAAAAAQ). The segment at 399 to 505 (DPEKRKLIQQ…REDCPVCKPL (107 aa)) adopts a TAZ-type 1 zinc-finger fold. Disordered regions lie at residues 558–593 (EGFNGNPFQNGPNRGGPRPPGGNGEIPNLPPPDMPD) and 706–864 (GRSD…DTVF). The span at 559 to 573 (GFNGNPFQNGPNRGG) shows a compositional bias: low complexity. Residues 593-672 (DCTKEWHHQV…KIYKIQKELQ (80 aa)) form the KIX domain. The segment covering 721–773 (PSQQNQPWGGAPNSNMHQQIPPNGQVPQVNNSSTFPSSGNSTPNIGASSTVSA) has biased composition (polar residues). Over residues 834–854 (KDTKDGVAESKPKEQQAKREP) the composition is skewed to basic and acidic residues. Residues 864–970 (FSQEDLIKFL…EMFVSEMDPV (107 aa)) enclose the Bromo domain. Interaction with histone stretches follow at residues 902 to 948 (DYHE…YNRK) and 1224 to 1226 (YLD). Residues 1112-1492 (KYLASKLPHN…LAYSLHETDS (381 aa)) form the CBP/p300-type HAT domain. Acetyl-CoA is bound by residues 1225-1227 (LDS), 1237-1238 (RT), Ile-1284, Arg-1289, and Trp-1293. The segment covering 1349–1358 (NEEAQRKVKE) has biased composition (basic and acidic residues). Residues 1349 to 1401 (NEEAQRKVKEDDDDGEDADGGLGGGDSGKKKSSKNKKNNLKKNAKMNKKKAGS) form a disordered region. Residues 1378-1399 (KKSSKNKKNNLKKNAKMNKKKA) are compositionally biased toward basic residues. The ZZ-type zinc finger occupies 1494-1540 (GMEYTCNKCSSPAVWHCQSCDDFDLCDGCKPTTQHPHEMEKIKSLIG). Zn(2+)-binding residues include Cys-1499, Cys-1502, Cys-1510, Cys-1513, Cys-1519, Cys-1522, His-1528, and His-1530. Residues 1550–1631 (GGTRYESIQR…ACTVPFCMNI (82 aa)) form a TAZ-type 2 zinc finger. Disordered stretches follow at residues 1656–1828 (GLQS…QPVR) and 1908–2017 (SQMS…AGGQ). A compositionally biased stretch (polar residues) spans 1667-1678 (TPSTVSNGTPSN). A compositionally biased stretch (low complexity) spans 1699 to 1708 (QVQMQQHQGS). The segment covering 1748 to 1757 (PQMNANQSRY) has biased composition (polar residues). 2 stretches are compositionally biased toward low complexity: residues 1793 to 1812 (MNPQQQPQQQQGHPGLQNPG) and 1908 to 1932 (SQMSMGSSNLQNLQQQQLQQQQAGA). The span at 1943–1962 (QNNSQPRAPSGQFASMNPSM) shows a compositional bias: polar residues. The span at 1963-2017 (QQQYPQQQQGWPQQRQQNPGGMQQNANPYNQFQNRQNMMMMPQQQQPHPSNAGGQ) shows a compositional bias: low complexity.

In terms of assembly, interacts (via N-terminus domain and HAT domain) with prmt-5; the interaction results in methylation of cbp-1. Interacts (via HAT domain) with cep-1; cep-1 transcriptional activity may be inhibited by interaction with methylated cbp-1. Component of a complex that contains prmt-5 and cbp-1. In terms of processing, methylation by prmt-5 may repress the capacity of cbp-1 to enhance cep-1-dependent transcription of egl-1.

The protein localises to the nucleus. The catalysed reaction is L-lysyl-[protein] + acetyl-CoA = N(6)-acetyl-L-lysyl-[protein] + CoA + H(+). Acetyltransferase enzyme. Acetylates histones, giving a specific tag for transcriptional activation. May prevent DNA damage-induced apoptosis by inhibiting cep-1-dependent transcription activation of the programmed cell death activator egl-1. In differentiated cells, negatively regulates localization of heterochromatin to the nuclear periphery. Plays a role in migration of gonadal distal tip cells, where it probably modulates expression of genes involved in integrin-mediated adhesion. This is Protein cbp-1 (cbp-1) from Caenorhabditis elegans.